Reading from the N-terminus, the 90-residue chain is MSRTVFCARLNKEADGLDFQLYPGELGKRIFDNISKEAWGQWQHKQTMLINEKKLNMMDPEHRKLLETEMVNFLFEGKEVHIEGYTPPSK.

The protein belongs to the Fe(2+)-trafficking protein family.

Its function is as follows. Could be a mediator in iron transactions between iron acquisition and iron-requiring processes, such as synthesis and/or repair of Fe-S clusters in biosynthetic enzymes. In Vibrio vulnificus (strain CMCP6), this protein is Probable Fe(2+)-trafficking protein.